Here is a 416-residue protein sequence, read N- to C-terminus: Histidine--tRNA ligase (416 aa).

The protein belongs to the class-II aminoacyl-tRNA synthetase family.

The protein localises to the cytoplasm. It carries out the reaction tRNA(His) + L-histidine + ATP = L-histidyl-tRNA(His) + AMP + diphosphate + H(+). In Methanocaldococcus jannaschii (strain ATCC 43067 / DSM 2661 / JAL-1 / JCM 10045 / NBRC 100440) (Methanococcus jannaschii), this protein is Histidine--tRNA ligase (hisS).